The primary structure comprises 121 residues: NADH-quinone oxidoreductase subunit A 2 (121 aa).

3 helical membrane-spanning segments follow: residues 6–26 (FLPV…TLFV), 60–80 (VPFF…MFLF), and 89–109 (IGFV…VGFA).

Belongs to the complex I subunit 3 family. NDH-1 is composed of 14 different subunits. Subunits NuoA, H, J, K, L, M, N constitute the membrane sector of the complex.

Its subcellular location is the cell inner membrane. It carries out the reaction a quinone + NADH + 5 H(+)(in) = a quinol + NAD(+) + 4 H(+)(out). NDH-1 shuttles electrons from NADH, via FMN and iron-sulfur (Fe-S) centers, to quinones in the respiratory chain. The immediate electron acceptor for the enzyme in this species is believed to be ubiquinone. Couples the redox reaction to proton translocation (for every two electrons transferred, four hydrogen ions are translocated across the cytoplasmic membrane), and thus conserves the redox energy in a proton gradient. The polypeptide is NADH-quinone oxidoreductase subunit A 2 (Rhizobium meliloti (strain 1021) (Ensifer meliloti)).